The following is a 311-amino-acid chain: Taste receptor type 2 member 40 (311 aa).

The Extracellular segment spans residues 1–9 (MSSLFSSFC). The chain crosses the membrane as a helical span at residues 10-30 (LVIAIFESVVGLLGNGTIVAV). Topologically, residues 31-55 (SSTSCIRSKILSSYDVIVIFLSLSR) are cytoplasmic. The helical transmembrane segment at 56–76 (FFLQLWMILDFLLIFFCQPSY) threads the bilayer. At 77 to 87 (YEENLFVTFKT) the chain is on the extracellular side. A helical transmembrane segment spans residues 88-108 (VFIFLNSYSFWFAAWLSVFYC). The Cytoplasmic segment spans residues 109 to 128 (VKVASFTQSFLSWLKQRIAS). A helical transmembrane segment spans residues 129–149 (LIPWMLITSSLFSFATSLPFF). Residues 150–178 (WDSYNAHSNFTTPLTMTNSSKRITTRKTN) are Extracellular-facing. The helical transmembrane segment at 179–199 (LIFLILLCNVGIALPSIMLVF) threads the bilayer. The Cytoplasmic segment spans residues 200–235 (SSILLIRSLWRHTRQMQNNATGFRDPSLEALIGAIK). A helical transmembrane segment spans residues 236–256 (TVFSFLLLYITNFIALILILS). At 257–266 (DTFVPLSTEE) the chain is on the extracellular side. Residues 267-287 (AICVVVVAACPAGQSMVLIWS) traverse the membrane as a helical segment. Over 288 to 311 (NPRFRELLSSILHYVNSCVRARCS) the chain is Cytoplasmic.

Belongs to the G-protein coupled receptor T2R family. Expressed in the oral cavity, as well as in the gastrointestinal tract, including in the upper palate, tongue, proventriculus, ventriculus, duodenum, jejunum, ileum, cecum and colon.

The protein resides in the cell membrane. Functionally, bitter taste receptor. Binds quinine, dextromethorphan, diphenhydramine, diphenidol, chlorpheniramine, diphenidol, chloramphenicol, chloroquine and coumarin, this latter being a weak agonist, as well as epiquinidine, ethylhydrocupreine and quinidine. The protein is Taste receptor type 2 member 40 (TAS2R40) of Gallus gallus (Chicken).